An 874-amino-acid polypeptide reads, in one-letter code: Ribosome biogenesis protein ERB1 (874 aa).

A disordered region spans residues 1-148; sequence MAKKEVSASK…DAFAAADAAT (148 aa). Residues 27–41 show a composition bias toward basic and acidic residues; that stretch reads QAVEKEEAEKEKEEG. Acidic residues predominate over residues 55-77; sequence PESDSDDEGAAAAEEEEEEEEQQ. Residues 78–89 show a composition bias toward basic and acidic residues; sequence QDVKELDLDKGE. Acidic residues-rich tracts occupy residues 95 to 104 and 128 to 139; these read SDAEDFDSEE and PKEDGDEQDEQD. Residues 312-429 form a required for interaction with NOP7 region; the sequence is RFVPSKHEAK…LRLVPGYQDS (118 aa). A required for interaction with YTM1 region spans residues 429–465; sequence SVRERFERSLDLYLAPRLRKNKLNIDPESLIPELPSP. WD repeat units lie at residues 481-520 and 529-569; these read GHTG…QVFK and NGED…FEIE. Residues 593 to 602 show a composition bias toward basic and acidic residues; that stretch reads KVKGEDTKGD. A disordered region spans residues 593–640; sequence KVKGEDTKGDLDDDEEEEEEEEDDDDDEGQGKVKAHNSTAPAKKDVAK. The segment covering 603–620 has biased composition (acidic residues); it reads LDDDEEEEEEEEDDDDDE. 5 WD repeats span residues 658–700, 703–741, 744–783, 787–827, and 843–874; these read QCRR…SQSP, KSKG…LLKK, PGVR…TPYK, YHEK…DLMT, and INQI…LWTT.

It belongs to the WD repeat BOP1/ERB1 family. As to quaternary structure, component of the NOP7 complex, composed of ERB1, NOP7 and YTM1. The complex is held together by ERB1, which interacts with NOP7 via its N-terminal domain and with YTM1 via a high-affinity interaction between the seven-bladed beta-propeller domains of the 2 proteins. The NOP7 complex associates with the 66S pre-ribosome.

It localises to the nucleus. The protein resides in the nucleolus. It is found in the nucleoplasm. Component of the NOP7 complex, which is required for maturation of the 25S and 5.8S ribosomal RNAs and formation of the 60S ribosome. The protein is Ribosome biogenesis protein ERB1 of Lodderomyces elongisporus (strain ATCC 11503 / CBS 2605 / JCM 1781 / NBRC 1676 / NRRL YB-4239) (Yeast).